The sequence spans 463 residues: MDYSYDEDLDELCPVCGDKVSGYHYGLLTCESCKGFFKRTVQNNKHYTCTESQNCKIDKTQRKRCPYCRFQKCLTVGMRLEAVRADRMRGGRNKFGPMYKRDRALKQQKKALIRANGFKLETGPSMGPPPQTDYPLAPALHPGAKGLAPAPPAGPPGDYERGPYGPPGVPMAVPTHGPLAGYLYPAFPGRAIKSEYPEPYASPHEPAPPYGYPEPYPSGPGLPGVPELILKLLQLEPDEGQLKARILACLQEPSKGRPDRPTPFGLMCKMADQTLFSIVEWARSCVVFKELEVADQMKLLQNCWSELLVFDHIYRQIQHGKEGSILLVTGQEVDLSTVAAQAGSLLHSLVLRAQDLVQQLHSLQVDRQEFVCLKFLILFSLDVKFLENHGLAKDAQEKANSALLEYTMCHYPHCGDKFRQLLLRLAEVRSLSMQAEEYLYHKHLGGEVPCNNLLIEMLHAKRT.

Positions 10-85 form a DNA-binding region, nuclear receptor; the sequence is DELCPVCGDK…VGMRLEAVRA (76 aa). The NR C4-type zinc finger occupies 13 to 33; sequence CPVCGDKVSGYHYGLLTCESC. Residues Lys-34, Lys-38, and Lys-72 each carry the N6-acetyllysine modification. The NR C4-type zinc-finger motif lies at 49–73; sequence CTESQNCKIDKTQRKRCPYCRFQKC. Residue Lys-119 forms a Glycyl lysine isopeptide (Lys-Gly) (interchain with G-Cter in SUMO) linkage. The interval 119 to 160 is disordered; that stretch reads KLETGPSMGPPPQTDYPLAPALHPGAKGLAPAPPAGPPGDYE. The span at 135 to 148 shows a compositional bias: low complexity; that stretch reads PLAPALHPGAKGLA. Lys-193 is covalently cross-linked (Glycyl lysine isopeptide (Lys-Gly) (interchain with G-Cter in SUMO)). The interval 197-216 is disordered; sequence PEPYASPHEPAPPYGYPEPY. Ser-202 is modified (phosphoserine; by CDK7). Positions 205–216 are enriched in pro residues; sequence EPAPPYGYPEPY. The NR LBD domain maps to 224 to 461; it reads GVPELILKLL…NLLIEMLHAK (238 aa). A 1,2-diacyl-sn-glycero-3-phosphocholine contacts are provided by Gly-343, Tyr-438, and Lys-442.

This sequence belongs to the nuclear hormone receptor family. NR5 subfamily. Binds DNA as a monomer. Part of a complex consisting of SFPQ, NONO and NR5A1. Interacts with NR0B2, NCOA2 and PPARGC1A. Interacts with DGKQ and CDK7. Binds to and activated by HIPK3. Acetylation stimulates the transcriptional activity. In terms of processing, sumoylation reduces CDK7-mediated phosphorylation on Ser-202. Post-translationally, phosphorylated on Ser-202 by CDK7. This phosphorylation promotes transcriptional activity. In terms of tissue distribution, expressed in the pre-granulosa and Sertoli cells of the ovary and testis, respectively. In the testis it is also present in the interstitial cells. In the adult ovary it is expressed in the interstitial gland, and in the granulosa cells and theca interna of small to medium-sized antral follicles, but is not expressed in large antral follicles.

The protein localises to the nucleus. Its function is as follows. Transcriptional activator. Seems to be essential for sexual differentiation and formation of the primary steroidogenic tissues. Binds to the Ad4 site found in the promoter region of steroidogenic P450 genes such as CYP11A, CYP11B and CYP21B. Also regulates the AMH/Muellerian inhibiting substance gene as well as the AHCH and STAR genes. 5'-YCAAGGYC-3' and 5'-RRAGGTCA-3' are the consensus sequences for the recognition by NR5A1. The SFPQ-NONO-NR5A1 complex binds to the CYP17 promoter and regulates basal and cAMP-dependent transcriptional activity. Binds phosphatidylcholine and phospholipids with a phosphatidylinositol (PI) headgroup, in particular PI(3,4)P2 and PI(3,4,5)P3. Activated by the phosphorylation of NR5A1 by HIPK3 leading to increased steroidogenic gene expression upon cAMP signaling pathway stimulation. In Notamacropus eugenii (Tammar wallaby), this protein is Steroidogenic factor 1 (NR5A1).